The chain runs to 770 residues: 1,4-alpha-glucan branching enzyme GlgB (770 aa).

Asp-437 acts as the Nucleophile in catalysis. Glu-488 acts as the Proton donor in catalysis.

It belongs to the glycosyl hydrolase 13 family. GlgB subfamily. As to quaternary structure, monomer.

It catalyses the reaction Transfers a segment of a (1-&gt;4)-alpha-D-glucan chain to a primary hydroxy group in a similar glucan chain.. It functions in the pathway glycan biosynthesis; glycogen biosynthesis. In terms of biological role, catalyzes the formation of the alpha-1,6-glucosidic linkages in glycogen by scission of a 1,4-alpha-linked oligosaccharide from growing alpha-1,4-glucan chains and the subsequent attachment of the oligosaccharide to the alpha-1,6 position. The chain is 1,4-alpha-glucan branching enzyme GlgB from Synechococcus sp. (strain JA-3-3Ab) (Cyanobacteria bacterium Yellowstone A-Prime).